We begin with the raw amino-acid sequence, 133 residues long: Agouti-signaling protein (133 aa).

An N-terminal signal peptide occupies residues 1–22; the sequence is MDVIHLFLATLLVSLCFLTAYS. The segment covering 26 to 36 has biased composition (basic and acidic residues); that stretch reads PEEKPKDDRSL. Residues 26 to 83 form a disordered region; that stretch reads PEEKPKDDRSLRNNSSMNLLDSPSVSIMALNKKSKKISRKEAEKKKRSSKKKASMTKV. Over residues 37–50 the composition is skewed to polar residues; the sequence is RNNSSMNLLDSPSV. Asn-38 and Asn-39 each carry an N-linked (GlcNAc...) asparagine glycan. Positions 70–79 are enriched in basic residues; the sequence is KKRSSKKKAS. Cystine bridges form between Cys-94–Cys-109, Cys-101–Cys-115, Cys-108–Cys-126, Cys-112–Cys-133, and Cys-117–Cys-124. The 40-residue stretch at 94 to 133 folds into the Agouti domain; that stretch reads CVATRDSCKPPAPACCDPCASCQCRFFRSACSCRVLTRTC.

The protein resides in the secreted. Involved in the regulation of melanogenesis. The binding of ASP to MC1R precludes alpha-MSH initiated signaling and thus blocks production of cAMP, leading to a down-regulation of eumelanogenesis (brown/black pigment) and thus increasing synthesis of pheomelanin (yellow/red pigment). The sequence is that of Agouti-signaling protein (ASIP) from Equus caballus (Horse).